The chain runs to 153 residues: Zinc finger protein GIS2 (153 aa).

7 consecutive CCHC-type zinc fingers follow at residues 4 to 21 (KACYVCGKIGHLAEDCDS), 23 to 40 (RLCYNCNKPGHVQTDCTM), 47 to 64 (KQCYNCGETGHVRSECTV), 65 to 82 (QRCFNCNQTGHISRECPE), 92 to 109 (VSCYKCGGPNHMAKDCMK), 116 to 133 (LKCYTCGQAGHMSRDCQN), and 135 to 152 (RLCYNCNETGHISKDCPK).

The protein localises to the cytoplasm. May act in the sexual differentiation pathway. In Saccharomyces cerevisiae (strain ATCC 204508 / S288c) (Baker's yeast), this protein is Zinc finger protein GIS2 (GIS2).